Reading from the N-terminus, the 277-residue chain is 3-methyl-2-oxobutanoate hydroxymethyltransferase (277 aa).

Mg(2+)-binding residues include Asp-53 and Asp-96. 3-methyl-2-oxobutanoate-binding positions include 53-54, Asp-96, and Lys-126; that span reads DS. Glu-128 is a Mg(2+) binding site. Glu-195 functions as the Proton acceptor in the catalytic mechanism.

Belongs to the PanB family. Homodecamer; pentamer of dimers. Requires Mg(2+) as cofactor.

Its subcellular location is the cytoplasm. The enzyme catalyses 3-methyl-2-oxobutanoate + (6R)-5,10-methylene-5,6,7,8-tetrahydrofolate + H2O = 2-dehydropantoate + (6S)-5,6,7,8-tetrahydrofolate. The protein operates within cofactor biosynthesis; (R)-pantothenate biosynthesis; (R)-pantoate from 3-methyl-2-oxobutanoate: step 1/2. Its function is as follows. Catalyzes the reversible reaction in which hydroxymethyl group from 5,10-methylenetetrahydrofolate is transferred onto alpha-ketoisovalerate to form ketopantoate. The polypeptide is 3-methyl-2-oxobutanoate hydroxymethyltransferase (Chlorobaculum tepidum (strain ATCC 49652 / DSM 12025 / NBRC 103806 / TLS) (Chlorobium tepidum)).